A 179-amino-acid chain; its full sequence is Gamma-crystallin S (179 aa).

S2 bears the N-acetylserine mark. An N-terminal arm region spans residues 2-5 (SKTG). Beta/gamma crystallin 'Greek key' domains follow at residues 6-44 (TKIT…RVEG) and 45-87 (GTWA…RALH). Residues 88 to 93 (LSSGGQ) are connecting peptide. 2 Beta/gamma crystallin 'Greek key' domains span residues 94–134 (YKIQ…KVLD) and 135–177 (GAWI…RRIV).

This sequence belongs to the beta/gamma-crystallin family. As to quaternary structure, monomer.

In terms of biological role, crystallins are the dominant structural components of the vertebrate eye lens. This is Gamma-crystallin S (CRYGS) from Oryctolagus cuniculus (Rabbit).